A 497-amino-acid chain; its full sequence is Aldehyde dehydrogenase (497 aa).

G241–G246 contributes to the NAD(+) binding site. E264 serves as the catalytic Proton acceptor. Catalysis depends on C298, which acts as the Nucleophile.

This sequence belongs to the aldehyde dehydrogenase family.

It is found in the cytoplasm. The enzyme catalyses an aldehyde + NAD(+) + H2O = a carboxylate + NADH + 2 H(+). It participates in alcohol metabolism; ethanol degradation; acetate from ethanol: step 2/2. The sequence is that of Aldehyde dehydrogenase (ALTA10) from Alternaria alternata (Alternaria rot fungus).